Consider the following 83-residue polypeptide: Cytochrome b559 subunit alpha (83 aa).

The helical transmembrane segment at 21-35 (VIHSITIPSLFIAGW) threads the bilayer. His23 provides a ligand contact to heme.

This sequence belongs to the PsbE/PsbF family. In terms of assembly, heterodimer of an alpha subunit and a beta subunit. PSII is composed of 1 copy each of membrane proteins PsbA, PsbB, PsbC, PsbD, PsbE, PsbF, PsbH, PsbI, PsbJ, PsbK, PsbL, PsbM, PsbT, PsbX, PsbY, PsbZ, Psb30/Ycf12, at least 3 peripheral proteins of the oxygen-evolving complex and a large number of cofactors. It forms dimeric complexes. Heme b is required as a cofactor.

It is found in the plastid. It localises to the chloroplast thylakoid membrane. Its function is as follows. This b-type cytochrome is tightly associated with the reaction center of photosystem II (PSII). PSII is a light-driven water:plastoquinone oxidoreductase that uses light energy to abstract electrons from H(2)O, generating O(2) and a proton gradient subsequently used for ATP formation. It consists of a core antenna complex that captures photons, and an electron transfer chain that converts photonic excitation into a charge separation. The sequence is that of Cytochrome b559 subunit alpha from Physcomitrium patens (Spreading-leaved earth moss).